The sequence spans 469 residues: GTPase Der (469 aa).

EngA-type G domains follow at residues 3–166 (PVIA…PEDE) and 177–350 (LRLA…ESAN). GTP-binding positions include 9–16 (GRPNVGKS), 56–60 (DTGGI), 118–121 (NKVD), 183–190 (GRPNVGKS), 230–234 (DTAGV), and 295–298 (NKWD). The region spanning 351–435 (LKVSPAKLTQ…PVKIEFKTSE (85 aa)) is the KH-like domain.

This sequence belongs to the TRAFAC class TrmE-Era-EngA-EngB-Septin-like GTPase superfamily. EngA (Der) GTPase family. Associates with the 50S ribosomal subunit.

In terms of biological role, GTPase that plays an essential role in the late steps of ribosome biogenesis. This chain is GTPase Der, found in Acinetobacter baumannii (strain ACICU).